A 41-amino-acid chain; its full sequence is Large ribosomal subunit protein bL36 (41 aa).

Belongs to the bacterial ribosomal protein bL36 family.

The protein is Large ribosomal subunit protein bL36 of Rickettsia africae (strain ESF-5).